Here is a 250-residue protein sequence, read N- to C-terminus: Mediator of RNA polymerase II transcription subunit 8 (250 aa).

Positions 217 to 250 (SPMSAVSPGAGPLGKMPSGIKTNIKSANQVHPYR) are disordered. Residues 236–250 (IKTNIKSANQVHPYR) show a composition bias toward polar residues.

It belongs to the Mediator complex subunit 8 family. As to quaternary structure, component of the Mediator complex.

It is found in the nucleus. Functionally, component of the Mediator complex, a coactivator involved in the regulated transcription of nearly all RNA polymerase II-dependent genes. Mediator functions as a bridge to convey information from gene-specific regulatory proteins to the basal RNA polymerase II transcription machinery. Mediator is recruited to promoters by direct interactions with regulatory proteins and serves as a scaffold for the assembly of a functional preinitiation complex with RNA polymerase II and the general transcription factors. This chain is Mediator of RNA polymerase II transcription subunit 8 (MED8), found in Aedes aegypti (Yellowfever mosquito).